Consider the following 195-residue polypeptide: Putative NADH dehydrogenase/NAD(P)H nitroreductase Caul_0018 (195 aa).

The protein belongs to the nitroreductase family. HadB/RutE subfamily. Requires FMN as cofactor.

This is Putative NADH dehydrogenase/NAD(P)H nitroreductase Caul_0018 from Caulobacter sp. (strain K31).